We begin with the raw amino-acid sequence, 120 residues long: Large ribosomal subunit protein eL8 (120 aa).

This sequence belongs to the eukaryotic ribosomal protein eL8 family. In terms of assembly, part of the 50S ribosomal subunit. Probably part of the RNase P complex.

The protein localises to the cytoplasm. Its function is as follows. Multifunctional RNA-binding protein that recognizes the K-turn motif in ribosomal RNA, the RNA component of RNase P, box H/ACA, box C/D and box C'/D' sRNAs. This Halorubrum lacusprofundi (strain ATCC 49239 / DSM 5036 / JCM 8891 / ACAM 34) protein is Large ribosomal subunit protein eL8.